Reading from the N-terminus, the 149-residue chain is Large ribosomal subunit protein bL9 (149 aa).

This sequence belongs to the bacterial ribosomal protein bL9 family.

Binds to the 23S rRNA. This Xanthomonas axonopodis pv. citri (strain 306) protein is Large ribosomal subunit protein bL9.